A 585-amino-acid chain; its full sequence is Amyloid protein-binding protein 2 (585 aa).

TPR repeat units follow at residues 50–83 (QGRLCQLGSEFCELEVFAKVLRALDKRHLLHHCF), 120–153 (IQVGFVLGGFLSDAGWYSDAEKVFLSCLQLCTLH), 206–239 (AALYGELCALLFAKSHYDEAYKWCIEAMKEITAG), 288–321 (SDTLLDYGFYLLNVDNICQSVAIYQAALDIRQSV), 333–367 (HEDLAYSSYVHQYSSGKFDNALFHAERAIGIITHI), 429–462 (AKHYGNLGRLYQSMRKFKEAEEMHIKAIQIKEQL), 471–505 (ALSVGHLASLYNYDMNQYENAEKLYLRSIAIGKKL), and 514–547 (EYDYRGLIKLYNSIGNYEKVFEYHNVLSNWNRLR).

In terms of assembly, component of a CRL2 E3 ubiquitin-protein ligase complex, also named ECS (Elongin BC-CUL2/5-SOCS-box protein) complex, composed of CUL2, Elongin BC (ELOB and ELOC), RBX1 and substrate-specific adapter APPBP2. Interacts with APP; APP interaction inhibits the E3 ubiquitin-protein ligase activity of the CRL2(APPBP2) complex. In terms of processing, rapidly degraded by the proteasome upon overexpression of a C-terminal fragment of APP.

Its subcellular location is the nucleus. It localises to the cytoplasm. It is found in the cytoskeleton. The protein localises to the membrane. The protein operates within protein modification; protein ubiquitination. Its activity is regulated as follows. E3 ubiquitin-protein ligase activity of the CRL2(APPBP2) complex is inhibited by APP. Its function is as follows. Substrate-recognition component of a Cul2-RING (CRL2) E3 ubiquitin-protein ligase complex of the DesCEND (destruction via C-end degrons) pathway, which recognizes a C-degron located at the extreme C terminus of target proteins, leading to their ubiquitination and degradation. The C-degron recognized by the DesCEND pathway is usually a motif of less than ten residues and can be present in full-length proteins, truncated proteins or proteolytically cleaved forms. The CRL2(APPBP2) complex specifically recognizes proteins with a -Arg-Xaa-Xaa-Gly degron at the C-terminus, leading to their ubiquitination and degradation. The CRL2(APPBP2) complex mediates ubiquitination and degradation of truncated SELENOV selenoproteins produced by failed UGA/Sec decoding, which end with a -Arg-Xaa-Xaa-Gly degron. May play a role in intracellular protein transport: may be involved in the translocation of APP along microtubules toward the cell surface. The chain is Amyloid protein-binding protein 2 from Homo sapiens (Human).